Here is a 143-residue protein sequence, read N- to C-terminus: Putative protein FPV235 (143 aa).

The sequence is that of Putative protein FPV235 from Vertebrata (FPV).